Reading from the N-terminus, the 393-residue chain is MQQTKKLTHSDITIAVMSGPFLQRGEPALVSKWYRTKMALACGVDLVVELPYAFSTQKAETFANGAISILNALHVSEICFGSEDGQIENFYNTVSAQKNEEETFNRLVKQFMNAGNSYAKATSEAFLHILSSEKNIDMSQPNNILGFQYIKAILMQNSSMQAQTIKRFASHYHDETFNDQHIASATSIRKQLFSENSSFTEIESFIPKATASLLASYKQNYGTLHNWEQYFSFFKYKLMTMSPKDLQHIYEIEEGLEHRILSKIQTSSSFHSFMEALKTKRYTWTRLQRACTHILTNTTKEEIHCANIEQHAPYIRLLGMSQKGQTYLSKNKKKIELPILTHTKTFDHPTLHIERKANSVYFSIMKEPLRTQLLKRDATHHPIRYDETTAKFL.

ATP is bound by residues Gly81, Asn142, and Arg167.

This sequence belongs to the TmcAL family.

It is found in the cytoplasm. The catalysed reaction is cytidine(34) in elongator tRNA(Met) + acetate + ATP = N(4)-acetylcytidine(34) in elongator tRNA(Met) + AMP + diphosphate. Catalyzes the formation of N(4)-acetylcytidine (ac(4)C) at the wobble position of elongator tRNA(Met), using acetate and ATP as substrates. First activates an acetate ion to form acetyladenylate (Ac-AMP) and then transfers the acetyl group to tRNA to form ac(4)C34. The sequence is that of tRNA(Met) cytidine acetate ligase from Bacillus cereus (strain ZK / E33L).